Here is a 490-residue protein sequence, read N- to C-terminus: Probable glycine dehydrogenase (decarboxylating) subunit 2 (490 aa).

Residue K273 is modified to N6-(pyridoxal phosphate)lysine.

This sequence belongs to the GcvP family. C-terminal subunit subfamily. The glycine cleavage system is composed of four proteins: P, T, L and H. In this organism, the P 'protein' is a heterodimer of two subunits. Pyridoxal 5'-phosphate is required as a cofactor.

It catalyses the reaction N(6)-[(R)-lipoyl]-L-lysyl-[glycine-cleavage complex H protein] + glycine + H(+) = N(6)-[(R)-S(8)-aminomethyldihydrolipoyl]-L-lysyl-[glycine-cleavage complex H protein] + CO2. The glycine cleavage system catalyzes the degradation of glycine. The P protein binds the alpha-amino group of glycine through its pyridoxal phosphate cofactor; CO(2) is released and the remaining methylamine moiety is then transferred to the lipoamide cofactor of the H protein. The sequence is that of Probable glycine dehydrogenase (decarboxylating) subunit 2 from Staphylococcus aureus (strain bovine RF122 / ET3-1).